The sequence spans 469 residues: 3-isopropylmalate dehydratase large subunit (469 aa).

The [4Fe-4S] cluster site is built by cysteine 349, cysteine 409, and cysteine 412.

This sequence belongs to the aconitase/IPM isomerase family. LeuC type 1 subfamily. In terms of assembly, heterodimer of LeuC and LeuD. [4Fe-4S] cluster is required as a cofactor.

It catalyses the reaction (2R,3S)-3-isopropylmalate = (2S)-2-isopropylmalate. It functions in the pathway amino-acid biosynthesis; L-leucine biosynthesis; L-leucine from 3-methyl-2-oxobutanoate: step 2/4. Catalyzes the isomerization between 2-isopropylmalate and 3-isopropylmalate, via the formation of 2-isopropylmaleate. The chain is 3-isopropylmalate dehydratase large subunit from Methylorubrum extorquens (strain CM4 / NCIMB 13688) (Methylobacterium extorquens).